The chain runs to 351 residues: DNA polymerase IV (351 aa).

The UmuC domain maps to 4 to 185 (IIHVDMDCFF…LPLAKIPGVG (182 aa)). Mg(2+) contacts are provided by Asp8 and Asp103. Residue Glu104 is part of the active site.

Belongs to the DNA polymerase type-Y family. As to quaternary structure, monomer. Mg(2+) is required as a cofactor.

The protein localises to the cytoplasm. It catalyses the reaction DNA(n) + a 2'-deoxyribonucleoside 5'-triphosphate = DNA(n+1) + diphosphate. In terms of biological role, poorly processive, error-prone DNA polymerase involved in untargeted mutagenesis. Copies undamaged DNA at stalled replication forks, which arise in vivo from mismatched or misaligned primer ends. These misaligned primers can be extended by PolIV. Exhibits no 3'-5' exonuclease (proofreading) activity. May be involved in translesional synthesis, in conjunction with the beta clamp from PolIII. In Escherichia coli O139:H28 (strain E24377A / ETEC), this protein is DNA polymerase IV.